A 463-amino-acid polypeptide reads, in one-letter code: UDP-N-acetylmuramoylalanine--D-glutamate ligase (463 aa).

109–115 contributes to the ATP binding site; the sequence is GTDGKST.

This sequence belongs to the MurCDEF family.

It is found in the cytoplasm. The enzyme catalyses UDP-N-acetyl-alpha-D-muramoyl-L-alanine + D-glutamate + ATP = UDP-N-acetyl-alpha-D-muramoyl-L-alanyl-D-glutamate + ADP + phosphate + H(+). Its pathway is cell wall biogenesis; peptidoglycan biosynthesis. Functionally, cell wall formation. Catalyzes the addition of glutamate to the nucleotide precursor UDP-N-acetylmuramoyl-L-alanine (UMA). This Leptospira interrogans serogroup Icterohaemorrhagiae serovar Lai (strain 56601) protein is UDP-N-acetylmuramoylalanine--D-glutamate ligase.